The following is a 333-amino-acid chain: Ketol-acid reductoisomerase (NADP(+)) (333 aa).

The KARI N-terminal Rossmann domain occupies 2–182 (AKMYYDSDAS…GCTRAGVLET (181 aa)). NADP(+)-binding positions include 25–28 (YGSQ), R48, S51, and 83–86 (DERQ). The active site involves H108. Residue G134 coordinates NADP(+). The 146-residue stretch at 183-328 (TFKEETETDL…AELRAMMPFI (146 aa)) folds into the KARI C-terminal knotted domain. Residues D191, E195, E227, and E231 each contribute to the Mg(2+) site. S252 lines the substrate pocket.

Belongs to the ketol-acid reductoisomerase family. Requires Mg(2+) as cofactor.

It catalyses the reaction (2R)-2,3-dihydroxy-3-methylbutanoate + NADP(+) = (2S)-2-acetolactate + NADPH + H(+). It carries out the reaction (2R,3R)-2,3-dihydroxy-3-methylpentanoate + NADP(+) = (S)-2-ethyl-2-hydroxy-3-oxobutanoate + NADPH + H(+). Its pathway is amino-acid biosynthesis; L-isoleucine biosynthesis; L-isoleucine from 2-oxobutanoate: step 2/4. The protein operates within amino-acid biosynthesis; L-valine biosynthesis; L-valine from pyruvate: step 2/4. Its function is as follows. Involved in the biosynthesis of branched-chain amino acids (BCAA). Catalyzes an alkyl-migration followed by a ketol-acid reduction of (S)-2-acetolactate (S2AL) to yield (R)-2,3-dihydroxy-isovalerate. In the isomerase reaction, S2AL is rearranged via a Mg-dependent methyl migration to produce 3-hydroxy-3-methyl-2-ketobutyrate (HMKB). In the reductase reaction, this 2-ketoacid undergoes a metal-dependent reduction by NADPH to yield (R)-2,3-dihydroxy-isovalerate. The chain is Ketol-acid reductoisomerase (NADP(+)) from Desulfitobacterium hafniense (strain DSM 10664 / DCB-2).